The primary structure comprises 574 residues: Proline--tRNA ligase (574 aa).

The protein belongs to the class-II aminoacyl-tRNA synthetase family. ProS type 1 subfamily. In terms of assembly, homodimer.

Its subcellular location is the cytoplasm. The enzyme catalyses tRNA(Pro) + L-proline + ATP = L-prolyl-tRNA(Pro) + AMP + diphosphate. Functionally, catalyzes the attachment of proline to tRNA(Pro) in a two-step reaction: proline is first activated by ATP to form Pro-AMP and then transferred to the acceptor end of tRNA(Pro). As ProRS can inadvertently accommodate and process non-cognate amino acids such as alanine and cysteine, to avoid such errors it has two additional distinct editing activities against alanine. One activity is designated as 'pretransfer' editing and involves the tRNA(Pro)-independent hydrolysis of activated Ala-AMP. The other activity is designated 'posttransfer' editing and involves deacylation of mischarged Ala-tRNA(Pro). The misacylated Cys-tRNA(Pro) is not edited by ProRS. The polypeptide is Proline--tRNA ligase (Hahella chejuensis (strain KCTC 2396)).